Reading from the N-terminus, the 565-residue chain is Salicyl-AMP ligase / salicyl-S-ArCP synthetase (565 aa).

ATP is bound by residues glycine 214, glycine 330, valine 352, aspartate 436, arginine 451, and lysine 542.

It belongs to the ATP-dependent AMP-binding enzyme family.

It catalyses the reaction salicylate + ATP + H(+) = 2-hydroxybenzoyl-5'-AMP + diphosphate. The enzyme catalyses 2-hydroxybenzoyl-5'-AMP + holo-[ACP] = salicyl-[ACP] + AMP + H(+). It functions in the pathway siderophore biosynthesis; mycobactin biosynthesis. Its activity is regulated as follows. Inhibited by salicyl-AMS, an acyl-AMP analog. Also inhibited by 5'-O-[(N-acyl)sulfamoyl]adenosines. Functionally, involved in the initial steps of the mycobactin biosynthetic pathway. Catalyzes the salicylation of the aryl carrier protein (ArCP) domain of MbtB through a two-step reaction. The first step is the ATP-dependent adenylation of salicylate to generate a salicyl-AMP intermediate. The second step is the transfer of this activated salicylate to MbtB to form a salicyl-ArCP domain thioester. This chain is Salicyl-AMP ligase / salicyl-S-ArCP synthetase, found in Mycobacterium tuberculosis (strain ATCC 25618 / H37Rv).